A 139-amino-acid chain; its full sequence is Probable disulfide formation protein C (139 aa).

Residues 8–27 (EYALLTAWGASFIATLGSLY) form a helical membrane-spanning segment. An intrachain disulfide couples C37 to C40. A run of 2 helical transmembrane segments spans residues 42-61 (YQRI…VAKK) and 68-85 (YSLP…YHYA). C99 and C104 are joined by a disulfide. The helical transmembrane segment at 113-135 (GFVTIPFLALIGFITIAVCSFIV) threads the bilayer.

Belongs to the DsbB family. BdbC subfamily.

The protein localises to the cell membrane. Its function is as follows. Required for disulfide bond formation in some proteins. This chain is Probable disulfide formation protein C, found in Bacillus cereus (strain ATCC 14579 / DSM 31 / CCUG 7414 / JCM 2152 / NBRC 15305 / NCIMB 9373 / NCTC 2599 / NRRL B-3711).